Consider the following 223-residue polypeptide: Protein DEHYDRATION-INDUCED 19 homolog 3 (223 aa).

Phosphothreonine is present on threonine 114. Serine 116 carries the phosphoserine modification.

The protein belongs to the Di19 family. Post-translationally, phosphorylated in vitro by CPK3 or CPK11. Expressed in seedlings, roots, leaves, stems, flowers and siliques.

The protein localises to the nucleus. This is Protein DEHYDRATION-INDUCED 19 homolog 3 (DI19-3) from Arabidopsis thaliana (Mouse-ear cress).